We begin with the raw amino-acid sequence, 547 residues long: Smu-2 suppressor of mec-8 and unc-52 protein (547 aa).

5 disordered regions span residues 18 to 125 (TSAR…AQDQ), 164 to 202 (IDKS…AQEL), 288 to 459 (AEPK…AGPK), 496 to 515 (NGEG…AKRL), and 524 to 547 (KIMD…KPKY). A compositionally biased stretch (basic and acidic residues) spans 34–44 (ADPKTGDDKPA). Residues 45–58 (SFKHKHLKPAKFKK) are compositionally biased toward basic residues. Residues 66 to 94 (KAKKEKTEADEDEAALKNILKNYRDRAAE) are a coiled coil. Residues 87 to 106 (NYRDRAAERRKQGDEKEDPS) show a composition bias toward basic and acidic residues. Residues 163-223 (EIDKSDDDDD…SLHRVLFKNE (61 aa)) form a required and sufficient for interaction with smu-1 region. Residues 166–178 (KSDDDDDDDIDTA) are compositionally biased toward acidic residues. Low complexity-rich tracts occupy residues 185 to 196 (SSSSSSKPSEAS) and 307 to 317 (APGAAAAAPGA). The segment covering 330 to 423 (VPSRKSRDSR…EREKKRKELE (94 aa)) has biased composition (basic and acidic residues). A run of 12 repeats spans residues 336 to 337 (RD), 339 to 340 (RD), 348 to 349 (RD), 350 to 351 (RS), 352 to 353 (RD), 354 to 355 (RS), 356 to 357 (RD), 358 to 359 (RD), 360 to 361 (RD), 362 to 363 (RD), 364 to 365 (RD), and 367 to 368 (RD). Residues 336 to 368 (RDSRDAGRRGSRRDRSRDRSRDRDRDRDRDNRD) form a 12 X 2 AA repeats of R-[DS] region. Residues 371-427 (FEKSANSRREEEQNRREQQRERERAEQERRREREKEREQEKAKEREKKRKELEESSG) are a coiled coil.

It belongs to the RED family. Probable component of the spliceosome. Heterotetramer with smu-1. The smu-1 homodimer interacts (via the N-terminal region including the LisH and CTLH domains) with smu-2, giving rise to a heterotetramer. As to expression, ubiquitous.

The protein resides in the nucleus. In terms of biological role, auxiliary spliceosomal protein that regulates selection of alternative splice sites in a small set of target pre-mRNA species. Selectively regulates alternative splicing of unc-52 exon 17. Thus, smu-2 mutants selectively suppress the effects of unc-52 nonsense mutations in exon 17 by promoting the accumulation of unc-52 isoforms that lack exon 17. In contrast, smu-2 mutants do not suppress the effects of an unc-52 mutation that affects the 5' splice site of exon 16. Required for normal accumulation of smu-1. The polypeptide is Smu-2 suppressor of mec-8 and unc-52 protein (Caenorhabditis elegans).